The sequence spans 230 residues: Poxin (230 aa).

His43 acts as the Proton donor in catalysis. Residue Tyr174 is the Shared with catalytic histidine of dimeric partner of the active site. The active-site Proton acceptor; shared with catalytic histidine of dimeric partner is Lys178.

This sequence belongs to the poxin family. Homodimer.

The enzyme catalyses 2',3'-cGAMP + H2O = Gp(2'-5')Ap(3') + H(+). Its function is as follows. Nuclease that cleaves host 2',3'-cGAMP. This chain is Poxin (P26), found in Orgyia pseudotsugata multicapsid polyhedrosis virus (OpMNPV).